We begin with the raw amino-acid sequence, 283 residues long: MISADSMLVYRDMDIGTAKPTLEEMAGIPHHMIDIVNPNEEFSVATYQSRVEELINQIIDRGNLPLLVGGTGLYIRSVIDHYDFTTAPKDDRLRECLKREAEQVGAAAMHKKLSEVDPQSAERLHPNDLRRVIRALEVYYQTGKTIAEYQYKDQVEKPKYNLKMFGLTMDRQLLYQRIEQRVDLMMARGLLTEVKELVEQYNGLGTALQGLGYKEIIGYLKGEYSLPEAVEILKRNTRRFAKRQLTWFRADNRIFWIEMDRFENKKAVANEIMKQMAGDFLTL.

The interval 5–8 is interaction with substrate tRNA; that stretch reads DSML.

The protein belongs to the IPP transferase family. Monomer. It depends on Mg(2+) as a cofactor.

It carries out the reaction adenosine(37) in tRNA + dimethylallyl diphosphate = N(6)-dimethylallyladenosine(37) in tRNA + diphosphate. In terms of biological role, catalyzes the transfer of a dimethylallyl group onto the adenine at position 37 in tRNAs that read codons beginning with uridine, leading to the formation of N6-(dimethylallyl)adenosine (i(6)A). The chain is tRNA dimethylallyltransferase from Desulforamulus reducens (strain ATCC BAA-1160 / DSM 100696 / MI-1) (Desulfotomaculum reducens).